The chain runs to 418 residues: AP-3 complex subunit mu-1 (418 aa).

Positions Asn176 to Arg417 constitute an MHD domain.

It belongs to the adaptor complexes medium subunit family. Adaptor protein complex 3 (AP-3) is a heterotetramer composed of two large adaptins (delta-type subunit AP3D1 and beta-type subunit AP3B1 or AP3B2), a medium adaptin (mu-type subunit AP3M1 or AP3M2) and a small adaptin (sigma-type subunit APS1 or AP3S2). Interacts with AGAP1. AP-3 associates with the BLOC-1 complex.

The protein localises to the golgi apparatus. It localises to the cytoplasmic vesicle membrane. In terms of biological role, part of the AP-3 complex, an adaptor-related complex which is not clathrin-associated. The complex is associated with the Golgi region as well as more peripheral structures. It facilitates the budding of vesicles from the Golgi membrane and may be directly involved in trafficking to lysosomes. In concert with the BLOC-1 complex, AP-3 is required to target cargos into vesicles assembled at cell bodies for delivery into neurites and nerve terminals. In Mus musculus (Mouse), this protein is AP-3 complex subunit mu-1 (Ap3m1).